A 498-amino-acid polypeptide reads, in one-letter code: MSKNEIRVRYAPSPTGHLHIGNARTALFNYLFARHNHGKFIIRIEDTDTKRNIADGERSQLDNLKWMGLDWDEGPDKGGDFGPYRQSERKDIYAQYIQELMDKGLAYKSYMTEEELEAQREAQKAAHQMPHYEYEYAGMSDDQIKAAQEAAEEKGLKPVIRFRVPKDEVFEWEDLVKGPMSFEAQSIGGDFVIQKRDGMPTYNFAVVIDDHLMKISHVFRGDDHVSNTPKQMAIYQALGWKVPEFGHMSLIINNETGKKLSKRDESVLQFIEQYRDLGYLPEAMDNFIILLGWSPVGEDEIFSLKEFVKMYDEKRLSKSPAAFDRKKLQWINNQYMKLSSADEVFHVAMPQLLDAGLIEKNANPYKMEWMRRLVELFKREISYAREIVDYVKPFVNGPEDISEEAKAEMQEDTALVVIKAFRDRVAAMDFMDATGVLAAIKDVQKSTKVKGRKLWMPLRIAVTHETHGPELPESIELFGQEKTLAHLDEMIAQLEENK.

Positions 12-22 (PSPTGHLHIGN) match the 'HIGH' region motif. Residues 259-263 (KLSKR) carry the 'KMSKS' region motif. K262 lines the ATP pocket.

This sequence belongs to the class-I aminoacyl-tRNA synthetase family. Glutamate--tRNA ligase type 1 subfamily. Monomer.

Its subcellular location is the cytoplasm. It catalyses the reaction tRNA(Glu) + L-glutamate + ATP = L-glutamyl-tRNA(Glu) + AMP + diphosphate. Functionally, catalyzes the attachment of glutamate to tRNA(Glu) in a two-step reaction: glutamate is first activated by ATP to form Glu-AMP and then transferred to the acceptor end of tRNA(Glu). The sequence is that of Glutamate--tRNA ligase from Limosilactobacillus fermentum (strain NBRC 3956 / LMG 18251) (Lactobacillus fermentum).